A 402-amino-acid polypeptide reads, in one-letter code: Putative PDZ domain-containing protein PDZK1P1 (402 aa).

2 consecutive PDZ domains span residues 12–93 (RLCY…VDKE) and 121–206 (IVEM…VDKE). The tract at residues 230 to 258 (GSVKEAPAPTPTSLEVSSPPDTTEEEDHK) is disordered. Residues 240–250 (PTSLEVSSPPD) show a composition bias toward polar residues. Residues 261–341 (LCRLAKGENG…NVTLLVCGKK (81 aa)) form the PDZ 3 domain. The tract at residues 362-402 (DTPPDSKEGIVVESKHDSHMAKERAHSTASHSSSNSEDTEM) is disordered. The span at 365 to 387 (PDSKEGIVVESKHDSHMAKERAH) shows a compositional bias: basic and acidic residues. Positions 388-402 (STASHSSSNSEDTEM) are enriched in low complexity.

This sequence belongs to the NHER family.

In Homo sapiens (Human), this protein is Putative PDZ domain-containing protein PDZK1P1.